Here is a 429-residue protein sequence, read N- to C-terminus: Histidine--tRNA ligase (429 aa).

Belongs to the class-II aminoacyl-tRNA synthetase family. As to quaternary structure, homodimer.

It localises to the cytoplasm. The enzyme catalyses tRNA(His) + L-histidine + ATP = L-histidyl-tRNA(His) + AMP + diphosphate + H(+). This is Histidine--tRNA ligase from Pseudomonas aeruginosa (strain UCBPP-PA14).